Consider the following 437-residue polypeptide: Trigger factor (437 aa).

In terms of domain architecture, PPIase FKBP-type spans 161–246 (GDQVNINFVG…VNSVSEAVLP (86 aa)).

It belongs to the FKBP-type PPIase family. Tig subfamily.

The protein localises to the cytoplasm. The catalysed reaction is [protein]-peptidylproline (omega=180) = [protein]-peptidylproline (omega=0). Involved in protein export. Acts as a chaperone by maintaining the newly synthesized protein in an open conformation. Functions as a peptidyl-prolyl cis-trans isomerase. The polypeptide is Trigger factor (Cellvibrio japonicus (strain Ueda107) (Pseudomonas fluorescens subsp. cellulosa)).